Reading from the N-terminus, the 1191-residue chain is MADDDLSSLAPVAPAVWMFFLKKTRELADIVAAMSLCDKATPVVIAPLLIDLTVDRDFCGAVRTPMSTYEGGVLTKVTSFCPFAFFFHNTDEILDVVEDHGDVVHLCDDARRRFGVQAFSPLANRDRTDVDVLCDELGIAPAEYTGHVVCGNGLKELLYAGQLIPCPEEAVKVQVGAVDGVKVPLYPYTLFSGGADAAHADGPSAAVACDDPWVLEHGFYDPALSEALFYFMFTSWGQSLRVCETSRLIEAGLQQFVEDTQQTVKLTPFKKYHGYTSQKLTAVERDQLMTVDAVCSELAFSYASIYLDSVYEFSTASNFLEWPLVKNAKTHADLLDNLRDFQLHLAKHIAALIFSSNSILYQTRIVFVPSAGKGANSNPSAQDSLLKSIRFFNGLTGMYDDILNDAKKTIRFEGAVGRDEKYSPHHLAYFCGTSPQLFSTLMWFFNRMSIYSTGVTSGDTVFSHIVNAGSKLCGACGGRCCHTCYATSFIRVNTRLPGIPKQIKKEPVVVTLLSRAFADADLLGNYGKRYGLESREAGDGGGGGAGGRTDEVAAGPPAGGASGLNFVSVDRMKYLGQVLDYCKKNSLIDAITGEDIINVRTKRDFVATVTALNQTIDDAVCRFAMDVRRSGHGRDEISGSTQSFNLDLSPYATAFSPVLSFQYYRTMFSIIQNLALINAASYVVDNPLTTAQISKWVTLHFQSICGAFGTTPLKKGFLNVKDTKNLKSVEFERIMDFRSFQETGRYRKISTEIKSCKMSVQSLKSCRIKNRPISKTPQSSVFFKKGALQRKNPIKGCLSFLLFRCHEKLFPRCGLSCLEFWQRVLQNSLPRSVNVGKVEDFDNLVRFLLTVTDDYDESDVVDIQPDCLLSYVENRFHNKFLYMFGFRDYMSTIQGMSTRLTPQNHSQFPCLLKDAPKFASIAEYVLHFKKMKLDGVKAPQVATITREPVLKKLFDGRSLVSVSFAVEKYSSSMGTRDVFQFGQIGYYVGSGVDRSLNTGSMGTQDYRFMRYRYIIATKLVDVLIRRSRRENVMYDRDVVRSRVLAALDSTGLDVDPELAAIAELMEGRDEGDIPEIDDILFYVDQQEYIARSMYRKMRSLAERGVTDFSLASLREATATNATAAGSAAGGGGSATEGGGGGAAADESGPMYDFSALFSRRDEAEDVNAGLINGDDVRGDDEFELPSKRSRL.

Positions 820 to 821 (FW) match the Required for filament formation motif. 2 disordered regions span residues 1122–1146 (TAAG…AADE) and 1168–1191 (AGLI…RSRL). Residues 1127-1142 (AAGGGGSATEGGGGGA) show a composition bias toward gly residues. Positions 1173 to 1191 (GDDVRGDDEFELPSKRSRL) are required for nuclear localization.

It belongs to the herpesviridae major DNA-binding protein family. As to quaternary structure, homooligomers. Forms double-helical filaments necessary for the formation of replication compartments within the host nucleus. Interacts with the origin-binding protein. Interacts with the helicase primase complex; this interaction stimulates primer synthesis activity of the helicase-primase complex. Interacts with the DNA polymerase. Interacts with the alkaline exonuclease; this interaction increases its nuclease processivity.

Its subcellular location is the host nucleus. In terms of biological role, single-stranded DNA-binding protein required for DNA replication. Its function is as follows. Plays several crucial roles in viral infection. Participates in the opening of the viral DNA origin to initiate replication by interacting with the origin-binding protein. May disrupt loops, hairpins and other secondary structures present on ssDNA to reduce and eliminate pausing of viral DNA polymerase at specific sites during elongation. Promotes viral DNA recombination by performing strand-transfer, characterized by the ability to transfer a DNA strand from a linear duplex to a complementary single-stranded DNA circle. Can also catalyze the renaturation of complementary single strands. Additionally, reorganizes the host cell nucleus, leading to the formation of prereplicative sites and replication compartments. This process is driven by the protein which can form double-helical filaments in the absence of DNA. This Mus musculus (Mouse) protein is Major DNA-binding protein.